A 338-amino-acid polypeptide reads, in one-letter code: MNLSRIGLDLAKQVFQVHGVDRHEHVVCRRQLKRAQVRDFFRQLPPCLVAMEACGSAHYWARELRELGHTVRLIAPQFVKPYVKGDKHDAHDAEAICEAASRPSMRYVPVKSAEQQAVQSMHRVRSRLVRARTALCNEVRGLLGEFGLIATRRGRAATMALLETVMATEPAPLPAPMGELLRELKDELQTLEARIARLERQIQAHVRGDARIQRLLAVEGIGPISASAVAASAGDARQFRTGRQFAAWLGLVPRQHSTGGQQRLGNISKRGDTYLRTLLIHGARAVVRCCANKTDARSRWLQGLLQRRPANVVAVALANKNARILWALLSRETCYRPG.

Belongs to the transposase 20 family.

In terms of biological role, required for the transposition of an insertion element. This Pseudomonas aeruginosa (strain ATCC 15692 / DSM 22644 / CIP 104116 / JCM 14847 / LMG 12228 / 1C / PRS 101 / PAO1) protein is Probable family 20 transposase.